We begin with the raw amino-acid sequence, 355 residues long: Mu-like prophage FluMu I protein (355 aa).

It belongs to the peptidase U35 family.

Functionally, potential protease involved in virion morphogenesis. This chain is Mu-like prophage FluMu I protein, found in Haemophilus influenzae (strain ATCC 51907 / DSM 11121 / KW20 / Rd).